We begin with the raw amino-acid sequence, 367 residues long: Phosphoribosylformylglycinamidine cyclo-ligase (367 aa).

This sequence belongs to the AIR synthase family.

It localises to the cytoplasm. The enzyme catalyses 2-formamido-N(1)-(5-O-phospho-beta-D-ribosyl)acetamidine + ATP = 5-amino-1-(5-phospho-beta-D-ribosyl)imidazole + ADP + phosphate + H(+). The protein operates within purine metabolism; IMP biosynthesis via de novo pathway; 5-amino-1-(5-phospho-D-ribosyl)imidazole from N(2)-formyl-N(1)-(5-phospho-D-ribosyl)glycinamide: step 2/2. The sequence is that of Phosphoribosylformylglycinamidine cyclo-ligase from Cyanothece sp. (strain PCC 7425 / ATCC 29141).